Consider the following 262-residue polypeptide: Calbindin (262 aa).

N-acetylthreonine is present on threonine 2. 5 consecutive EF-hand domains span residues 12–47 (ISAA…LQQA), 54–89 (DLTP…EENF), 99–134 (KSSE…LLQK), 143–178 (KLTE…QENF), and 187–222 (MCAK…LCEK). Ca(2+)-binding residues include aspartate 25, aspartate 27, asparagine 29, tyrosine 31, and glutamate 36. Residues aspartate 112, aspartate 114, serine 116, glutamate 123, aspartate 156, asparagine 158, aspartate 160, lysine 162, glutamate 167, aspartate 200, aspartate 202, asparagine 204, tyrosine 206, and glutamate 211 each coordinate Ca(2+).

It belongs to the calbindin family. Highly abundant in supporting cells. Also present in hair cells.

Buffers cytosolic calcium. May stimulate a membrane Ca(2+)-ATPase and a 3',5'-cyclic nucleotide phosphodiesterase. This Gallus gallus (Chicken) protein is Calbindin (CALB1).